A 151-amino-acid polypeptide reads, in one-letter code: Large ribosomal subunit protein uL13 (151 aa).

A disordered region spans residues 129-151; that stretch reads SNHPHQAQKPETLTINTIPGGNN.

The protein belongs to the universal ribosomal protein uL13 family. Part of the 50S ribosomal subunit.

Its function is as follows. This protein is one of the early assembly proteins of the 50S ribosomal subunit, although it is not seen to bind rRNA by itself. It is important during the early stages of 50S assembly. This Gloeothece citriformis (strain PCC 7424) (Cyanothece sp. (strain PCC 7424)) protein is Large ribosomal subunit protein uL13.